A 207-amino-acid chain; its full sequence is Dephospho-CoA kinase (207 aa).

Positions 8 to 207 constitute a DPCK domain; it reads AIALTGSIGS…LPCVDCVQSS (200 aa). Residue 16-21 coordinates ATP; the sequence is GSGKST.

It belongs to the CoaE family.

It localises to the cytoplasm. The catalysed reaction is 3'-dephospho-CoA + ATP = ADP + CoA + H(+). Its pathway is cofactor biosynthesis; coenzyme A biosynthesis; CoA from (R)-pantothenate: step 5/5. Functionally, catalyzes the phosphorylation of the 3'-hydroxyl group of dephosphocoenzyme A to form coenzyme A. This Helicobacter hepaticus (strain ATCC 51449 / 3B1) protein is Dephospho-CoA kinase.